Reading from the N-terminus, the 336-residue chain is 3-isopropylmalate dehydrogenase (336 aa).

Positions 87, 97, 121, and 211 each coordinate substrate. Positions 211, 235, and 239 each coordinate Mg(2+). 271–283 (GSAPDIAGQGIAD) contacts NAD(+).

Belongs to the isocitrate and isopropylmalate dehydrogenases family. LeuB type 2 subfamily. In terms of assembly, homodimer. It depends on Mg(2+) as a cofactor. The cofactor is Mn(2+).

Its subcellular location is the cytoplasm. It carries out the reaction (2R,3S)-3-isopropylmalate + NAD(+) = 4-methyl-2-oxopentanoate + CO2 + NADH. The protein operates within amino-acid biosynthesis; L-leucine biosynthesis; L-leucine from 3-methyl-2-oxobutanoate: step 3/4. Functionally, catalyzes the oxidation of 3-carboxy-2-hydroxy-4-methylpentanoate (3-isopropylmalate) to 3-carboxy-4-methyl-2-oxopentanoate. The product decarboxylates to 4-methyl-2 oxopentanoate. The chain is 3-isopropylmalate dehydrogenase from Mycobacterium bovis (strain ATCC BAA-935 / AF2122/97).